Reading from the N-terminus, the 353-residue chain is Phosphate acyltransferase (353 aa).

This sequence belongs to the PlsX family. As to quaternary structure, homodimer. Probably interacts with PlsY.

The protein localises to the cytoplasm. The enzyme catalyses a fatty acyl-[ACP] + phosphate = an acyl phosphate + holo-[ACP]. Its pathway is lipid metabolism; phospholipid metabolism. Its function is as follows. Catalyzes the reversible formation of acyl-phosphate (acyl-PO(4)) from acyl-[acyl-carrier-protein] (acyl-ACP). This enzyme utilizes acyl-ACP as fatty acyl donor, but not acyl-CoA. In Rhodopseudomonas palustris (strain ATCC BAA-98 / CGA009), this protein is Phosphate acyltransferase.